Consider the following 307-residue polypeptide: Myeloid-associated differentiation marker-like protein 2 (307 aa).

MARVEL domains lie at 17–154 (AVTS…ARPG) and 159–303 (YMAT…RIRF). 7 helical membrane passes run 53 to 73 (FCMAAWGFCFAFSVLVVACEF), 90 to 110 (AFAMLATLLCATAAVIYPLYF), 129 to 149 (LAASVFAGLLFLAYAAEVALT), 163 to 183 (VSGLLKIVQAFVACIIFGALV), 198 to 218 (VAVYSLCFMATVAVVVLSVMG), 232 to 252 (IVYTFLAVLLYLSAAVIWPVF), and 278 to 298 (LVVAIFTYVNLLLYIVDLAYS).

The protein belongs to the MAL family.

Its subcellular location is the membrane. This is Myeloid-associated differentiation marker-like protein 2 (Myadml2) from Mus musculus (Mouse).